Consider the following 683-residue polypeptide: FAD-binding monooxygenase ausC (683 aa).

An N-linked (GlcNAc...) asparagine glycan is attached at Asn5. The chain crosses the membrane as a helical span at residues 111 to 131; sequence ILIIGAGFGGLLFAVRLIQTG. Residues 150–153, 162–163, and Tyr168 each bind FAD; these read TWYW and DT. An NADP(+)-binding site is contributed by 160–162; that stretch reads MCD. N-linked (GlcNAc...) asparagine glycosylation is present at Asn286. NADP(+)-binding positions include 310-316 and 333-334; these read TGASAVQ and RT. N-linked (GlcNAc...) asparagine glycans are attached at residues Asn525 and Asn572.

It belongs to the FAD-binding monooxygenase family. FAD serves as cofactor.

The protein resides in the membrane. It catalyses the reaction preaustinoid A + AH2 + O2 = preaustinoid A1 + A + H2O. Its pathway is secondary metabolite biosynthesis; terpenoid biosynthesis. FAD-binding monooxygenase; part of the gene cluster A that mediates the biosynthesis of austinol and dehydroaustinol, two fungal meroterpenoids. The first step of the pathway is the synthesis of 3,5-dimethylorsellinic acid by the polyketide synthase ausA. 3,5-dimethylorsellinic acid is then prenylated by the polyprenyl transferase ausN. Further epoxidation by the FAD-dependent monooxygenase ausM and cyclization by the probable terpene cyclase ausL lead to the formation of protoaustinoid A. Protoaustinoid A is then oxidized to spiro-lactone preaustinoid A3 by the combined action of the FAD-binding monooxygenases ausB and ausC, and the dioxygenase ausE. Acid-catalyzed keto-rearrangement and ring contraction of the tetraketide portion of preaustinoid A3 by ausJ lead to the formation of preaustinoid A4. The aldo-keto reductase ausK, with the help of ausH, is involved in the next step by transforming preaustinoid A4 into isoaustinone which is in turn hydroxylated by the P450 monooxygenase ausI to form austinolide. Finally, the cytochrome P450 monooxygenase ausG modifies austinolide to austinol. Austinol can be further modified to dehydroaustinol which forms a diffusible complex with diorcinol that initiates conidiation. Due to genetic rearrangements of the clusters and the subsequent loss of some enzymes, the end products of the Emericella nidulans austinoid biosynthesis clusters are austinol and dehydroaustinol, even if additional enzymes, such as the O-acetyltransferase ausQ and the cytochrome P450 monooxygenase ausR are still functional. This is FAD-binding monooxygenase ausC from Emericella nidulans (strain FGSC A4 / ATCC 38163 / CBS 112.46 / NRRL 194 / M139) (Aspergillus nidulans).